A 1795-amino-acid polypeptide reads, in one-letter code: Type III effector AvrE (1795 aa).

Residues 1 to 18 (MQSPSIHRNTGSIIQPTV) show a composition bias toward polar residues. A disordered region spans residues 1 to 227 (MQSPSIHRNT…PPREPMLWRS (227 aa)). The segment covering 60–75 (KSKAPQQKAATPPTAK) has biased composition (low complexity). Polar residues-rich tracts occupy residues 97-109 (GFSNSSPQNTHSA) and 117-127 (HPNQASSSGAQ). The span at 129–154 (HEIHPEAAPRKNLRVRFDLPQDRLER) shows a compositional bias: basic and acidic residues. The span at 174–191 (ATRQFRSPDSHLQGSDGT) shows a compositional bias: polar residues. A compositionally biased stretch (low complexity) spans 203–215 (PSSSGSKIGDSDG). Short sequence motifs (wxxxE) lie at residues 393–397 (WKIPE) and 829–833 (WQRFE). The disordered stretch occupies residues 1461-1488 (QIGGSHTAPTGTPASAPGPTPASQTAAN). The span at 1467–1487 (TAPTGTPASAPGPTPASQTAA) shows a compositional bias: low complexity. The ERMRS signature appears at 1787-1790 (KKEG).

It belongs to the AvrE family. As to quaternary structure, in planta interaction assays, interacts with the A.thaliana protein phosphatase 2A (PP2A) via direct interaction/association with specific B' regulatory subunits.

Its subcellular location is the secreted. The protein localises to the host cell. The protein resides in the host cell membrane. With respect to regulation, polyamidoamine dendrimers inhibit channel and virulence activities. Its function is as follows. Major virulence factor that may function as a water- and solute-permeable channel dedicated to creating osmotic/water potential perturbation and a water- and nutrient-rich apoplast in which bacteria multiply within the infected plant tissues. Expression in Xenopus oocytes results in inward and outward currents, permeability to water and osmolarity-dependent oocyte swelling and bursting. In terms of biological role, elicits cell death in host tomato leaves and in non-host Nicotiana tabacum leaves. Acts within plant cells and promotes lesion formation. The combined action of AvrE and HopM1 is particularly important in promoting bacterial growth in plants. Contributes to the down-regulation of a specific subset of A.thaliana genes during infection, including NHL13, which is required for antibacterial immunity. The polypeptide is Type III effector AvrE (Pseudomonas syringae pv. tomato (strain ATCC BAA-871 / DC3000)).